We begin with the raw amino-acid sequence, 453 residues long: tRNA modification GTPase MnmE (453 aa).

(6S)-5-formyl-5,6,7,8-tetrahydrofolate-binding residues include Arg22, Glu79, and Lys119. One can recognise a TrmE-type G domain in the interval 215–376 (GMKVVIAGRP…LKLHLKSLMG (162 aa)). Asn225 is a binding site for K(+). Residues 225 to 230 (NAGKSS), 244 to 250 (TEIAGTT), 269 to 272 (DTAG), and 334 to 337 (NKAD) contribute to the GTP site. A Mg(2+)-binding site is contributed by Ser229. Thr244, Ile246, and Thr249 together coordinate K(+). Thr250 lines the Mg(2+) pocket. Lys453 lines the (6S)-5-formyl-5,6,7,8-tetrahydrofolate pocket.

The protein belongs to the TRAFAC class TrmE-Era-EngA-EngB-Septin-like GTPase superfamily. TrmE GTPase family. Homodimer. Heterotetramer of two MnmE and two MnmG subunits. The cofactor is K(+).

The protein resides in the cytoplasm. Functionally, exhibits a very high intrinsic GTPase hydrolysis rate. Involved in the addition of a carboxymethylaminomethyl (cmnm) group at the wobble position (U34) of certain tRNAs, forming tRNA-cmnm(5)s(2)U34. In Shewanella sp. (strain W3-18-1), this protein is tRNA modification GTPase MnmE.